The chain runs to 254 residues: Ribosomal RNA small subunit methyltransferase J (254 aa).

Residues 107 to 108 (RD), 123 to 124 (ER), and D174 contribute to the S-adenosyl-L-methionine site.

It belongs to the methyltransferase superfamily. RsmJ family.

Its subcellular location is the cytoplasm. The enzyme catalyses guanosine(1516) in 16S rRNA + S-adenosyl-L-methionine = N(2)-methylguanosine(1516) in 16S rRNA + S-adenosyl-L-homocysteine + H(+). Specifically methylates the guanosine in position 1516 of 16S rRNA. The polypeptide is Ribosomal RNA small subunit methyltransferase J (Coxiella burnetii (strain CbuK_Q154) (Coxiella burnetii (strain Q154))).